Here is a 126-residue protein sequence, read N- to C-terminus: Small ribosomal subunit protein uS13 (126 aa).

Positions 98-126 are disordered; that stretch reads VRGQSTKNNARTRKGKRKTVANKKKAAKK. The span at 107 to 126 shows a compositional bias: basic residues; that stretch reads ARTRKGKRKTVANKKKAAKK.

This sequence belongs to the universal ribosomal protein uS13 family. Part of the 30S ribosomal subunit. Forms a loose heterodimer with protein S19. Forms two bridges to the 50S subunit in the 70S ribosome.

In terms of biological role, located at the top of the head of the 30S subunit, it contacts several helices of the 16S rRNA. In the 70S ribosome it contacts the 23S rRNA (bridge B1a) and protein L5 of the 50S subunit (bridge B1b), connecting the 2 subunits; these bridges are implicated in subunit movement. Contacts the tRNAs in the A and P-sites. This chain is Small ribosomal subunit protein uS13, found in Amoebophilus asiaticus (strain 5a2).